Here is a 313-residue protein sequence, read N- to C-terminus: MAFNHKHILGIEQMSAEDITLILDTAESFKDVSLRSIKKVPTLRGKTVINVFFEASTRTRTSFEIAGKRLSADTVNISASTSAVVKGETLEDTAKNLEAMKPDIIVMRHSCSGAPHYLAERCDFSVINAGDGAHEHPSQALLDLLTIRQKKGHIEGLTVAIIGDITHSRVARSNVYALNKLGAEVRLCGPGTMLPPGIERLGAQVFDRIDDAVSGADVVMMLRIQQERQGKTMLPSLREYSMFYGLTPDRMKLAKPDAIVMHPGPMNRGVEISSAVADGPQNVILDQVENGVAVRMALLYLVSGGEKLEDSAQ.

Carbamoyl phosphate is bound by residues R58 and T59. L-aspartate is bound at residue K86. 3 residues coordinate carbamoyl phosphate: R108, H136, and Q139. 2 residues coordinate L-aspartate: R169 and R223. Residues G264 and P265 each coordinate carbamoyl phosphate.

Belongs to the aspartate/ornithine carbamoyltransferase superfamily. ATCase family. Heterododecamer (2C3:3R2) of six catalytic PyrB chains organized as two trimers (C3), and six regulatory PyrI chains organized as three dimers (R2).

The enzyme catalyses carbamoyl phosphate + L-aspartate = N-carbamoyl-L-aspartate + phosphate + H(+). The protein operates within pyrimidine metabolism; UMP biosynthesis via de novo pathway; (S)-dihydroorotate from bicarbonate: step 2/3. In terms of biological role, catalyzes the condensation of carbamoyl phosphate and aspartate to form carbamoyl aspartate and inorganic phosphate, the committed step in the de novo pyrimidine nucleotide biosynthesis pathway. This is Aspartate carbamoyltransferase catalytic subunit from Syntrophotalea carbinolica (strain DSM 2380 / NBRC 103641 / GraBd1) (Pelobacter carbinolicus).